A 402-amino-acid polypeptide reads, in one-letter code: S-adenosylmethionine synthase (402 aa).

Position 140-145 (140-145) interacts with ATP; sequence GNGSID.

Belongs to the AdoMet synthase 2 family. The cofactor is Mg(2+).

The enzyme catalyses L-methionine + ATP + H2O = S-adenosyl-L-methionine + phosphate + diphosphate. It participates in amino-acid biosynthesis; S-adenosyl-L-methionine biosynthesis; S-adenosyl-L-methionine from L-methionine: step 1/1. In terms of biological role, catalyzes the formation of S-adenosylmethionine from methionine and ATP. The polypeptide is S-adenosylmethionine synthase (Picrophilus torridus (strain ATCC 700027 / DSM 9790 / JCM 10055 / NBRC 100828 / KAW 2/3)).